The chain runs to 466 residues: Histone acetyltransferase type B catalytic subunit DDB_G0275159 (466 aa).

The N-acetyltransferase domain occupies 169-366 (AVFRYHEKLQ…FRIAIKKRLY (198 aa)). Acetyl-CoA-binding positions include 240–242 (YLI) and 247–253 (QRMGHGK). Glutamate 279 functions as the Proton donor/acceptor in the catalytic mechanism. A coiled-coil region spans residues 372–459 (DSEQIEKMKQ…LEENYHKTLS (88 aa)).

It belongs to the HAT1 family.

It catalyses the reaction L-lysyl-[protein] + acetyl-CoA = N(6)-acetyl-L-lysyl-[protein] + CoA + H(+). The chain is Histone acetyltransferase type B catalytic subunit DDB_G0275159 from Dictyostelium discoideum (Social amoeba).